Consider the following 201-residue polypeptide: Recombination protein RecR (201 aa).

The C4-type zinc finger occupies cysteine 60–cysteine 75. The region spanning alanine 83–proline 178 is the Toprim domain.

The protein belongs to the RecR family.

Its function is as follows. May play a role in DNA repair. It seems to be involved in an RecBC-independent recombinational process of DNA repair. It may act with RecF and RecO. This is Recombination protein RecR from Brucella abortus biovar 1 (strain 9-941).